Reading from the N-terminus, the 68-residue chain is Large ribosomal subunit protein bL32 (68 aa).

This sequence belongs to the bacterial ribosomal protein bL32 family.

This is Large ribosomal subunit protein bL32 from Orientia tsutsugamushi (strain Boryong) (Rickettsia tsutsugamushi).